A 181-amino-acid chain; its full sequence is Protein GrpE (181 aa).

Residues 1-10 are compositionally biased toward polar residues; it reads MENTQENPAT. The interval 1–33 is disordered; the sequence is MENTQENPATPSAEDIGSEKQAAQGAAPAAEAA. Over residues 21 to 33 the composition is skewed to low complexity; that stretch reads QAAQGAAPAAEAA.

This sequence belongs to the GrpE family. Homodimer.

It is found in the cytoplasm. Functionally, participates actively in the response to hyperosmotic and heat shock by preventing the aggregation of stress-denatured proteins, in association with DnaK and GrpE. It is the nucleotide exchange factor for DnaK and may function as a thermosensor. Unfolded proteins bind initially to DnaJ; upon interaction with the DnaJ-bound protein, DnaK hydrolyzes its bound ATP, resulting in the formation of a stable complex. GrpE releases ADP from DnaK; ATP binding to DnaK triggers the release of the substrate protein, thus completing the reaction cycle. Several rounds of ATP-dependent interactions between DnaJ, DnaK and GrpE are required for fully efficient folding. The polypeptide is Protein GrpE (Burkholderia cenocepacia (strain ATCC BAA-245 / DSM 16553 / LMG 16656 / NCTC 13227 / J2315 / CF5610) (Burkholderia cepacia (strain J2315))).